The following is a 450-amino-acid chain: MNEILNTKDINAIGEFFIETWGCQMNEEDSEKLSGMLKKEGYIRTEERENADVIIFNTCCVRENAELKVYGNLGILKGLKSKNPNLIIAVTGCMMQQKGMAETIKKKFPFVDIIIGTHNLHNFPNYLNEVKKKDTSVLKIQEKEDSIIENMPIDRKNSMKAFVTIMYGCNNFCTYCIVPYVRGRERSRTPENIEDEIKKLISEGYKEITLLGQNVNSYGKDLEPKVTFAELLERVNTIDGLERVRFMTSHPKDLTDDVIEAIAKCDKLCEQIHLPVQSGSSEILKKMNRHYDREKYLDVVSKIKKLIPNVALSTDIIVGFPGETEKDFEETLSLVKEVEYDSAFTFLYSIRKGTPAAKFEDQVPEDVKHKRFNRLVEVVNEISAKKNKAYEGKIEEVLVEGTSKNDENKLMGRTRTGKLVNFIGDKDSIGKLVNVKIIKANSFSLTGEEI.

In terms of domain architecture, MTTase N-terminal spans 14–132; that stretch reads GEFFIETWGC…FPNYLNEVKK (119 aa). The [4Fe-4S] cluster site is built by Cys-23, Cys-59, Cys-93, Cys-169, Cys-173, and Cys-176. The Radical SAM core domain occupies 155-385; that stretch reads RKNSMKAFVT…VEVVNEISAK (231 aa). The 63-residue stretch at 388–450 folds into the TRAM domain; the sequence is KAYEGKIEEV…NSFSLTGEEI (63 aa).

It belongs to the methylthiotransferase family. MiaB subfamily. Monomer. Requires [4Fe-4S] cluster as cofactor.

The protein resides in the cytoplasm. The enzyme catalyses N(6)-dimethylallyladenosine(37) in tRNA + (sulfur carrier)-SH + AH2 + 2 S-adenosyl-L-methionine = 2-methylsulfanyl-N(6)-dimethylallyladenosine(37) in tRNA + (sulfur carrier)-H + 5'-deoxyadenosine + L-methionine + A + S-adenosyl-L-homocysteine + 2 H(+). Functionally, catalyzes the methylthiolation of N6-(dimethylallyl)adenosine (i(6)A), leading to the formation of 2-methylthio-N6-(dimethylallyl)adenosine (ms(2)i(6)A) at position 37 in tRNAs that read codons beginning with uridine. The chain is tRNA-2-methylthio-N(6)-dimethylallyladenosine synthase from Clostridium botulinum (strain Okra / Type B1).